The sequence spans 690 residues: MSCFSHVMNPITGQNSWQERGDDYDYHLEVANAGFGDMLHDWERNQKYFAALKKTIAGMREAGREVHVLDIGTGTGILSMMAVEAGADSVTACEAFLPMANCAERILAANGAGDKVRLIRKRSTEIQVGEDMPRKANLLVAELLDTELIGEGAIGIYNHAHAELLTEDALCIPARARCYAQVAQSPLAAQWNSLKTIANLDGEPLLHPPEQLKSCQGEAALHDVQLSQLPSSAFRPLTDPVEIFQFDFQRKLEREKQRAQLLTLQSKQPGAAELVFYWWDIQLDDGGEILLSCAPYWAHPQLKELAAEKGKDHPLANVLPWRDHWMQAIYYIPKPLQLVEAGKSFHLSCHHDEYSLWFDAREEAPTKSVRRHTCTCDLHMTYSRSRIGQINQSTRNKRYLRYLEENIEAEKSNVLVLGNGCLLGLASSALGAASVLLHEPHRFSRRLLESIVTHNQLKNVQFLDKVEELEDSQLSALTHVFAEPYFLNAILPWDNFYFGTLLTKIKDRLPESVKISPCSARIYALPVEFLDLHKIRAPVGSCEGFDLRLFDEMVERSAEQAVSLVEAQPLWEYPCRALSEPQEVLNVEFSSFTQEHSLKGSIELKHPGTCNGVALWVDWQLVEENSPRSIVSSGPSEPVVPGEFVKWDMFVRQGVHFPRRPTGGITHLEWSTDFKPVLGELNFSFGQKKL.

SAM-dependent MTase PRMT-type domains are found at residues 14-357 and 366-690; these read QNSW…YSLW and TKSV…QKKL.

It belongs to the class I-like SAM-binding methyltransferase superfamily. Protein arginine N-methyltransferase family. PRMT7 subfamily.

Its function is as follows. Essential arginine methyltransferase that can both catalyze the formation of omega-N monomethylarginine (MMA) and symmetrical dimethylarginine (sDMA). Specifically mediates the symmetrical dimethylation of arginine residues in the small nuclear ribonucleoproteins SmD1 and SmD3. This is Protein arginine N-methyltransferase 7 (Art7) from Drosophila yakuba (Fruit fly).